We begin with the raw amino-acid sequence, 386 residues long: uncharacterized protein (386 aa).

Positions 29 to 76 (KYWKFLNEDCKIEVLKYLDYCSRCQLSICSKSDHKLVSITPLYVYEIE) constitute an F-box domain.

This is an uncharacterized protein from Caenorhabditis elegans.